Here is a 166-residue protein sequence, read N- to C-terminus: Large ribosomal subunit protein mL49 (166 aa).

The segment at 54-77 (PTKIPEPPKHKHYPTPSGWQPPRD) is disordered.

This sequence belongs to the mitochondrion-specific ribosomal protein mL49 family. In terms of assembly, component of the mitochondrial ribosome large subunit (39S) which comprises a 16S rRNA and about 50 distinct proteins. Interacts with OXA1L.

The protein resides in the mitochondrion. This Mus musculus (Mouse) protein is Large ribosomal subunit protein mL49 (Mrpl49).